Here is a 305-residue protein sequence, read N- to C-terminus: MPLLRIATRKSLLAMWQSEYVAARLRMLRPDLDVVLVPMSTRGDEILDRSLAAIGGKGLFLKELELAMLRGDADCAVHSLKDVPMDLEPPFMLAAVLSRDDPADALISNVYLSLESLPIGARVATSSLRRQAQLRFYRPDLRLFDLRGNVNTRLAKLDNGDYDAIVLACAGLRRLGLEQRMTARLAPPEWLPAPGQGAIAVESLTEDARIGTLLAGLDDLPTRQCVVAERTMNRALHGSCHVPVGAYASYEVGGMRLQGLVGCVADGRLVRAELCSAKDEGDMLGRAVAQCLLDAGAAELLAATA.

S-(dipyrrolylmethanemethyl)cysteine is present on C240.

This sequence belongs to the HMBS family. Monomer. It depends on dipyrromethane as a cofactor.

The catalysed reaction is 4 porphobilinogen + H2O = hydroxymethylbilane + 4 NH4(+). Its pathway is porphyrin-containing compound metabolism; protoporphyrin-IX biosynthesis; coproporphyrinogen-III from 5-aminolevulinate: step 2/4. Tetrapolymerization of the monopyrrole PBG into the hydroxymethylbilane pre-uroporphyrinogen in several discrete steps. In Xylella fastidiosa (strain 9a5c), this protein is Porphobilinogen deaminase (hemC).